The sequence spans 768 residues: Protein transport protein Sec23A (768 aa).

Thr2 bears the N-acetylthreonine mark. 4 residues coordinate Zn(2+): Cys61, Cys66, Cys85, and Cys88. The residue at position 308 (Thr308) is a Phosphothreonine. The stretch at 632-718 (PEPVLLDSSS…EHGGSQARFL (87 aa)) is one Gelsolin-like repeat.

Belongs to the SEC23/SEC24 family. SEC23 subfamily. In terms of assembly, COPII is composed of at least five proteins: the Sec23/24 complex, the Sec13/31 complex and Sar1. Interacts with SEC23IP. Interacts with HTR4. Interacts with SEC16A. Interacts with SLC6A4. Interacts (as part of the Sec23/24 complex) with SEC22B; recruits SEC22B into COPII-coated vesicles and allows the transport of this cargo from the endoplasmic reticulum to the Golgi. Interacts (via Gelsolin-like repeat) with MIA2 and MIA3; specifically involved in the transport of large cargos like the collagen COL7A1. Interacts with DDHD1. Interacts with TMEM39A. Interacts with SACM1L; this interaction is reduced in the absence of TMEM39A. Interacts with kinase FAM20C; transport of FAM20C from the endoplasmic reticulum to the Golgi is likely to be mediated by COPII vesicles.

The protein localises to the cytoplasmic vesicle. The protein resides in the COPII-coated vesicle membrane. It is found in the endoplasmic reticulum membrane. Its subcellular location is the cytoplasm. It localises to the cytosol. Functionally, component of the coat protein complex II (COPII) which promotes the formation of transport vesicles from the endoplasmic reticulum (ER). The coat has two main functions, the physical deformation of the endoplasmic reticulum membrane into vesicles and the selection of cargo molecules for their transport to the Golgi complex. Required for the translocation of insulin-induced glucose transporter SLC2A4/GLUT4 to the cell membrane. In Bos taurus (Bovine), this protein is Protein transport protein Sec23A.